We begin with the raw amino-acid sequence, 587 residues long: ATP-dependent RNA helicase HAS1 (587 aa).

Residues 1–11 (MDDRSSKKRKL) are compositionally biased toward basic residues. A disordered region spans residues 1–103 (MDDRSSKKRK…DGDIPGDLTL (103 aa)). The segment covering 42–54 (VEPKVEKGSKKEE) has biased composition (basic and acidic residues). Residues 55–69 (EENDWSDEEENEAAD) show a composition bias toward acidic residues. The Q motif motif lies at 112–140 (QAFSELNLSENTMKAIEEMGFTKMTEIQR). In terms of domain architecture, Helicase ATP-binding spans 143 to 317 (IPPLLAGKDV…RVSLRPGPLY (175 aa)). An ATP-binding site is contributed by 156–163 (AKTGSGKT). The short motif at 265–268 (DEAD) is the DEAD box element. The Helicase C-terminal domain maps to 331-501 (GLEQGYVVCE…NVQSQLEKLI (171 aa)). Residues 558–587 (GASMSKDKKAGGRRAYGSQPRQGGTYGKRR) are disordered.

The protein belongs to the DEAD box helicase family. DDX18/HAS1 subfamily. In terms of assembly, associates in the nucleolus with the 60S and pre-60S ribosomal subunits.

Its subcellular location is the nucleus. The protein localises to the nucleolus. It carries out the reaction ATP + H2O = ADP + phosphate + H(+). In terms of biological role, ATP-dependent RNA helicase involved in 40S ribosomal subunit biogenesis. Required for the processing and cleavage of 35S pre-rRNA at sites A0, A1, and A2, leading to mature 18S rRNA. This chain is ATP-dependent RNA helicase HAS1 (HAS1), found in Pyricularia oryzae (strain 70-15 / ATCC MYA-4617 / FGSC 8958) (Rice blast fungus).